Reading from the N-terminus, the 430-residue chain is Adenylosuccinate synthetase (430 aa).

Residues 12-18 and 40-42 each bind GTP; these read GDEGKGK and GHT. Catalysis depends on aspartate 13, which acts as the Proton acceptor. Aspartate 13 and glycine 40 together coordinate Mg(2+). IMP-binding positions include 13-16, 38-41, threonine 128, arginine 142, glutamine 223, threonine 238, and arginine 302; these read DEGK and NAGH. Histidine 41 serves as the catalytic Proton donor. Residue 298-304 participates in substrate binding; that stretch reads TTTGRPR. Residues arginine 304, 330 to 332, and 412 to 414 contribute to the GTP site; these read SID and SVG.

It belongs to the adenylosuccinate synthetase family. Homodimer. It depends on Mg(2+) as a cofactor.

It localises to the cytoplasm. It carries out the reaction IMP + L-aspartate + GTP = N(6)-(1,2-dicarboxyethyl)-AMP + GDP + phosphate + 2 H(+). It participates in purine metabolism; AMP biosynthesis via de novo pathway; AMP from IMP: step 1/2. Its function is as follows. Plays an important role in the de novo pathway of purine nucleotide biosynthesis. Catalyzes the first committed step in the biosynthesis of AMP from IMP. The protein is Adenylosuccinate synthetase of Enterococcus faecalis (strain ATCC 700802 / V583).